The primary structure comprises 342 residues: S-adenosylmethionine:tRNA ribosyltransferase-isomerase (342 aa).

This sequence belongs to the QueA family. As to quaternary structure, monomer.

Its subcellular location is the cytoplasm. The enzyme catalyses 7-aminomethyl-7-carbaguanosine(34) in tRNA + S-adenosyl-L-methionine = epoxyqueuosine(34) in tRNA + adenine + L-methionine + 2 H(+). The protein operates within tRNA modification; tRNA-queuosine biosynthesis. Its function is as follows. Transfers and isomerizes the ribose moiety from AdoMet to the 7-aminomethyl group of 7-deazaguanine (preQ1-tRNA) to give epoxyqueuosine (oQ-tRNA). This is S-adenosylmethionine:tRNA ribosyltransferase-isomerase from Listeria innocua serovar 6a (strain ATCC BAA-680 / CLIP 11262).